The chain runs to 337 residues: Junctional sarcoplasmic reticulum protein 1 (337 aa).

A mediates interaction with CACNA1S region spans residues 1 to 84; that stretch reads MATRAMEELD…EKEPVSKVTS (84 aa). Disordered regions lie at residues 23-125 and 159-337; these read SALA…ELPW and EAPA…KGRD. Basic and acidic residues-rich tracts occupy residues 49–59 and 69–79; these read SRSHDSQERVT and TKPKKMEKEPV. Residues 165–180 show a composition bias toward low complexity; it reads PESWASSSSSPKGPAS. A compositionally biased stretch (basic and acidic residues) spans 199 to 213; sequence SKLEERVQIPRSEEA. The span at 214-225 shows a compositional bias: acidic residues; sequence AEKDEWESEEAA. 3 stretches are compositionally biased toward basic and acidic residues: residues 236-277, 285-309, and 316-325; these read GPKE…RGAR, RRWE…DRKR, and RRPDEEDRPL. Residues 326–337 are compositionally biased toward basic residues; sequence GRQKRRAGKGRD.

In terms of assembly, interacts with CACNA1S, CACNB1 and calsequestrin.

It is found in the sarcoplasmic reticulum membrane. The protein resides in the endoplasmic reticulum membrane. Its function is as follows. Involved in skeletal muscle excitation/contraction coupling (EC), probably acting as a regulator of the voltage-sensitive calcium channel CACNA1S. EC is a physiological process whereby an electrical signal (depolarization of the plasma membrane) is converted into a chemical signal, a calcium gradient, by the opening of ryanodine receptor calcium release channels. May regulate CACNA1S membrane targeting and activity. The chain is Junctional sarcoplasmic reticulum protein 1 (JSRP1) from Bos taurus (Bovine).